The primary structure comprises 89 residues: DNA/RNA-binding protein Alba 2 (89 aa).

At Lys-12 the chain carries N6-acetyllysine.

The protein belongs to the histone-like Alba family. Acetylated. Acetylation at Lys-12 decreases DNA-binding affinity.

The protein localises to the cytoplasm. Its subcellular location is the chromosome. In terms of biological role, binds double-stranded DNA tightly but without sequence specificity. Involved in DNA compaction. The sequence is that of DNA/RNA-binding protein Alba 2 from Saccharolobus shibatae (strain ATCC 51178 / DSM 5389 / JCM 8931 / NBRC 15437 / B12) (Sulfolobus shibatae).